A 237-amino-acid chain; its full sequence is Putative N-acetylmannosamine-6-phosphate 2-epimerase (237 aa).

Belongs to the NanE family.

It carries out the reaction an N-acyl-D-glucosamine 6-phosphate = an N-acyl-D-mannosamine 6-phosphate. The protein operates within amino-sugar metabolism; N-acetylneuraminate degradation; D-fructose 6-phosphate from N-acetylneuraminate: step 3/5. Functionally, converts N-acetylmannosamine-6-phosphate (ManNAc-6-P) to N-acetylglucosamine-6-phosphate (GlcNAc-6-P). This Listeria monocytogenes serotype 4a (strain HCC23) protein is Putative N-acetylmannosamine-6-phosphate 2-epimerase.